Reading from the N-terminus, the 267-residue chain is Thiazole synthase (267 aa).

The active-site Schiff-base intermediate with DXP is Lys-107. 1-deoxy-D-xylulose 5-phosphate is bound by residues Gly-168, 194–195, and 216–217; these read AG and NT.

It belongs to the ThiG family. Homotetramer. Forms heterodimers with either ThiH or ThiS.

It localises to the cytoplasm. It carries out the reaction [ThiS sulfur-carrier protein]-C-terminal-Gly-aminoethanethioate + 2-iminoacetate + 1-deoxy-D-xylulose 5-phosphate = [ThiS sulfur-carrier protein]-C-terminal Gly-Gly + 2-[(2R,5Z)-2-carboxy-4-methylthiazol-5(2H)-ylidene]ethyl phosphate + 2 H2O + H(+). It participates in cofactor biosynthesis; thiamine diphosphate biosynthesis. Catalyzes the rearrangement of 1-deoxy-D-xylulose 5-phosphate (DXP) to produce the thiazole phosphate moiety of thiamine. Sulfur is provided by the thiocarboxylate moiety of the carrier protein ThiS. In vitro, sulfur can be provided by H(2)S. The polypeptide is Thiazole synthase (Aquifex aeolicus (strain VF5)).